Reading from the N-terminus, the 1624-residue chain is ATP-binding cassette sub-family A member 9 (1624 aa).

Residues 31-51 form a helical membrane-spanning segment; it reads LLEWLFSFLLVLFLYLFFSNL. 2 N-linked (GlcNAc...) asparagine glycosylation sites follow: Asn120 and Asn195. 6 helical membrane passes run 221-243, 269-289, 300-320, 329-349, 354-374, and 398-418; these read VATD…YVSV, SWGL…ALIV, FVMV…LAFL, FLTG…GFPA, LPAF…TVGM, and LIIA…VLTL. In terms of domain architecture, ABC transporter 1 spans 481-716; the sequence is IRIKNLKKEY…WGIGYHLSLH (236 aa). 517–524 serves as a coordination point for ATP; the sequence is GHSGAGKT. A helical membrane pass occupies residues 864–884; it reads LWTILLLFGISFIPQLLEHLF. Asn949 carries an N-linked (GlcNAc...) asparagine glycan. 6 helical membrane-spanning segments follow: residues 1026 to 1046, 1065 to 1085, 1108 to 1128, 1136 to 1156, 1163 to 1183, and 1200 to 1220; these read TFFW…SSIG, AYWF…LLLM, ILCS…ISFI, SGIW…ATDL, GLFF…LFIF, and EIVY…LFIL. Positions 1288-1521 constitute an ABC transporter 2 domain; the sequence is LRKEYAGKKK…FGKDYLLEMK (234 aa). Residue 1326 to 1333 coordinates ATP; it reads GHNGAGKS.

It belongs to the ABC transporter superfamily. ABCA family. Widely expressed with higher expression in heart.

It is found in the membrane. Functionally, transporter that may play a role in monocyte differentiation and lipid transport and homeostasis. This chain is ATP-binding cassette sub-family A member 9 (ABCA9), found in Homo sapiens (Human).